The chain runs to 492 residues: Probable proline dehydrogenase, mitochondrial (492 aa).

It belongs to the proline oxidase family. Requires FAD as cofactor.

It is found in the mitochondrion. It catalyses the reaction L-proline + a quinone = (S)-1-pyrroline-5-carboxylate + a quinol + H(+). Functionally, converts proline to delta-1-pyrroline-5-carboxylate. The protein is Probable proline dehydrogenase, mitochondrial of Schizosaccharomyces pombe (strain 972 / ATCC 24843) (Fission yeast).